We begin with the raw amino-acid sequence, 378 residues long: Chitinase (378 aa).

A signal peptide spans 1–28 (MNFTVKYSFLVICLLCCLLSTYVSVIEG). A GH18 domain is found at 53-378 (GIIQGYYPSW…AIEYFVESLH (326 aa)). Glu-174 serves as the catalytic Proton donor. Cys-220 and Cys-230 are disulfide-bonded.

It belongs to the glycosyl hydrolase 18 family. Forms a hetero-multimeric, high molecular weight complex composed of at least CHT1, SOAP AND WARP. Within the complex, may interact with WARP via a disulfide bond.

It is found in the secreted. It localises to the cytoplasmic vesicle. The protein resides in the secretory vesicle. Its subcellular location is the microneme. The catalysed reaction is Random endo-hydrolysis of N-acetyl-beta-D-glucosaminide (1-&gt;4)-beta-linkages in chitin and chitodextrins.. Inhibited by allosamidin. Endochitinase that cleaves beta-1,4-linkages between tri- and tetramers of N-acetylglucosamine (GlcNAc) from penta- and hexameric chitin oligomers. Does not cleave smaller chitin oligosaccharides. Required to cross the acellular, chitin-containing peritrophic matrix (PM) which is formed around the ingested blood meal in the mosquito midgut allowing the ookinete to invade the mosquito gut epithelium. This Plasmodium falciparum (isolate 3D7) protein is Chitinase.